The chain runs to 357 residues: 3-dehydroquinate synthase (357 aa).

Residues 69–74, 103–107, 127–128, Lys140, Lys149, and 167–170 each bind NAD(+); these read DGEQFK, GVVGD, TT, and CLQT. Positions 182, 245, and 262 each coordinate Zn(2+).

The protein belongs to the sugar phosphate cyclases superfamily. Dehydroquinate synthase family. Requires Co(2+) as cofactor. Zn(2+) is required as a cofactor. It depends on NAD(+) as a cofactor.

The protein resides in the cytoplasm. The catalysed reaction is 7-phospho-2-dehydro-3-deoxy-D-arabino-heptonate = 3-dehydroquinate + phosphate. It functions in the pathway metabolic intermediate biosynthesis; chorismate biosynthesis; chorismate from D-erythrose 4-phosphate and phosphoenolpyruvate: step 2/7. Functionally, catalyzes the conversion of 3-deoxy-D-arabino-heptulosonate 7-phosphate (DAHP) to dehydroquinate (DHQ). This chain is 3-dehydroquinate synthase, found in Idiomarina loihiensis (strain ATCC BAA-735 / DSM 15497 / L2-TR).